Consider the following 571-residue polypeptide: Optineurin (571 aa).

2 disordered regions span residues 1–32 (MSHQ…HPNL) and 100–144 (LSHE…DQLR). Residues 38 to 170 (EELLQQMKEL…VSELQLKLNS (133 aa)) adopt a coiled-coil conformation. The tract at residues 58–209 (MKLNNQAMKG…GPTRTVSIGT (152 aa)) is interaction with Rab8. 2 stretches are compositionally biased toward basic and acidic residues: residues 100-123 (LSHE…RSSE) and 130-143 (RLPR…KDQL). An LIR motif is present at residues 176–181 (DSFVEI). S177 carries the post-translational modification Phosphoserine; by TBK1. The segment covering 186 to 197 (GEAEGSVKEIKH) has biased composition (basic and acidic residues). 2 disordered regions span residues 186-210 (GEAE…IGTS) and 255-291 (VSDF…TVGS). S198 is modified (phosphoserine). A compositionally biased stretch (polar residues) spans 201-210 (PTRTVSIGTS). Residues 233–502 (CLREGNQKVE…LLKENDAFED (270 aa)) adopt a coiled-coil conformation. Composition is skewed to basic and acidic residues over residues 255–268 (VSDF…RSEI) and 275–286 (STEKENEEEKGP). Phosphoserine is present on S336. An interaction with HD region spans residues 405 to 571 (TRKESEKVDR…LQIHVMDCII (167 aa)). The interaction with MYO6 stretch occupies residues 406–514 (RKESEKVDRA…RQSLMEMQSR (109 aa)). Residues 468-473 (DFHAER) carry the UBAN motif. Residue S520 is modified to Phosphoserine. Residues 541–571 (QRNIPIHSCPKCGEVLPDIDTLQIHVMDCII) form a CCHC NOA-type zinc finger. C549, C552, H565, and C569 together coordinate Zn(2+).

Self-associates. Interacts with HD. Interacts with GTF3A. Interacts with MYO6. Interacts (via UBAN) with ubiquitinated TFRC. Interacts with GTP-bound Rab8 (RAB8A and/or RAB8B). Interacts with TBC1D17. Interacts with TBK1. Interacts with TRAF3. Binds to linear ubiquitin chains. Interacts with LC3 family members MAP1LC3A, MAP1LC3B, GABARAP, GABARAPL1 and GABARAPL2; OPTN phosphorylation increases the association (at least with MAP1LC3B). Interacts with RAB12; the interaction may be indirect. Interacts with TBK1; this interaction leads to the Golgi localization of TBK1 and its subsequent activation. Interacts with palmitoyltransferase ZDHHC17/HIP14; the interaction does not lead to palmitoylation of OPTN. Interacts with CYLD. Interacts with TOM1; the interaction is indirect and is mediated by MYO6, which acts as a bridge between TOM1 and OPTN. Interacts with USP12; the interaction is independent of USP12 deubiquitinase activity and may be involved in regulation of autophagic flux. In terms of processing, phosphorylated by TBK1, leading to restrict bacterial proliferation in case of infection.

Its subcellular location is the cytoplasm. The protein localises to the perinuclear region. The protein resides in the golgi apparatus. It is found in the trans-Golgi network. It localises to the cytoplasmic vesicle. Its subcellular location is the autophagosome. The protein localises to the recycling endosome. In terms of biological role, plays an important role in the maintenance of the Golgi complex, in membrane trafficking, in exocytosis, through its interaction with myosin VI and Rab8. Links myosin VI to the Golgi complex and plays an important role in Golgi ribbon formation. Negatively regulates the induction of IFNB in response to RNA virus infection. Plays a neuroprotective role in the eye and optic nerve. Probably part of the TNF-alpha signaling pathway that can shift the equilibrium toward induction of cell death. May act by regulating membrane trafficking and cellular morphogenesis via a complex that contains Rab8 and huntingtin (HD). Mediates the interaction of Rab8 with the probable GTPase-activating protein TBC1D17 during Rab8-mediated endocytic trafficking, such as that of transferrin receptor (TFRC/TfR); regulates Rab8 recruitment to tubules emanating from the endocytic recycling compartment. Autophagy receptor that interacts directly with both the cargo to become degraded and an autophagy modifier of the MAP1 LC3 family; targets ubiquitin-coated bacteria (xenophagy) and appears to function in the same pathway as SQSTM1 and CALCOCO2/NDP52. This is Optineurin (OPTN) from Macaca fascicularis (Crab-eating macaque).